Reading from the N-terminus, the 399-residue chain is Argininosuccinate synthase (399 aa).

ATP-binding positions include 8-16 and alanine 35; that span reads AYSGGLDTS. Residue tyrosine 87 participates in L-citrulline binding. Residue glycine 117 coordinates ATP. L-aspartate-binding residues include threonine 119, asparagine 123, and aspartate 124. L-citrulline is bound at residue asparagine 123. L-citrulline-binding residues include arginine 127, serine 176, serine 185, glutamate 261, and tyrosine 273.

The protein belongs to the argininosuccinate synthase family. Type 1 subfamily. As to quaternary structure, homotetramer.

The protein localises to the cytoplasm. The enzyme catalyses L-citrulline + L-aspartate + ATP = 2-(N(omega)-L-arginino)succinate + AMP + diphosphate + H(+). Its pathway is amino-acid biosynthesis; L-arginine biosynthesis; L-arginine from L-ornithine and carbamoyl phosphate: step 2/3. This chain is Argininosuccinate synthase, found in Buchnera aphidicola subsp. Cinara cedri (strain Cc).